Reading from the N-terminus, the 477-residue chain is Bile acid transporter (477 aa).

15 consecutive transmembrane segments (helical) span residues 13–33, 50–70, 83–103, 107–127, 139–159, 166–186, 206–226, 228–248, 272–292, 301–321, 333–353, 359–379, 381–401, 406–426, and 444–464; these read FVPF…TAVL, WISL…GKLG, IVIF…IFML, FIVG…IVTE, LYML…GLIM, VMMW…TFSI, LVVV…NIGW, STAF…LVMV, LILF…IVFV, IISS…SVII, VLTF…LFKA, IFAA…TIFM, VALS…YGLF, APFG…ANIA, and ISSI…GIIL.

It belongs to the major facilitator superfamily.

The protein localises to the cell membrane. The protein operates within lipid metabolism; bile acid degradation. The polypeptide is Bile acid transporter (baiG) (Clostridium scindens (strain JCM 10418 / VPI 12708)).